A 228-amino-acid chain; its full sequence is UPF0758 protein str1465 (228 aa).

Residues 103–225 form the MPN domain; the sequence is QIMSSQQVAR…YYSFREERED (123 aa). Residues histidine 174, histidine 176, and aspartate 187 each contribute to the Zn(2+) site. Positions 174-187 match the JAMM motif motif; that stretch reads HNHPSGEAYPSRND.

Belongs to the UPF0758 family.

The chain is UPF0758 protein str1465 from Streptococcus thermophilus (strain CNRZ 1066).